Reading from the N-terminus, the 123-residue chain is Iron-sulfur cluster insertion protein ErpA (123 aa).

Iron-sulfur cluster-binding residues include Cys51, Cys115, and Cys117.

This sequence belongs to the HesB/IscA family. In terms of assembly, homodimer. Requires iron-sulfur cluster as cofactor.

Required for insertion of 4Fe-4S clusters for at least IspG. This chain is Iron-sulfur cluster insertion protein ErpA, found in Halorhodospira halophila (strain DSM 244 / SL1) (Ectothiorhodospira halophila (strain DSM 244 / SL1)).